The chain runs to 437 residues: MTTSTLQKAIDLVTKATEEDKAKNYEEALRLYQHAVEYFLHAIKYEAHSDKAKESIRAKCVQYLDRAEKLKDYLRSKEKHGKKPVKENQSEGKGSDSDSEGDNPEKKKLQEQLMGAVVMEKPNIRWNDVAGLEGAKEALKEAVILPIKFPHLFTGKRTPWRGILLFGPPGTGKSYLAKAVATEANNSTFFSVSSSDLMSKWLGESEKLVKNLFELARQHKPSIIFIDEVDSLCGSRNENESEAARRIKTEFLVQMQGVGNNNDGTLVLGATNIPWVLDSAIRRRFEKRIYIPLPEEAARAQMFRLHLGSTPHNLTDANIHELARKTEGYSGADISIIVRDSLMQPVRKVQSATHFKKVCGPSRTNPSMMIDDLLTPCSPGDPGAMEMTWMDVPGDKLLEPVVCMSDMLRSLATTRPTVNADDLLKVKKFSEDFGQES.

Positions 1 to 84 (MTTSTLQKAI…RSKEKHGKKP (84 aa)) are interaction with CHMP1B. In terms of domain architecture, MIT spans 2 to 80 (TTSTLQKAID…KDYLRSKEKH (79 aa)). The residue at position 8 (lysine 8) is an N6-acetyllysine. The segment at 75–106 (RSKEKHGKKPVKENQSEGKGSDSDSEGDNPEK) is disordered. The segment covering 84–96 (PVKENQSEGKGSD) has biased composition (basic and acidic residues). A phosphoserine mark is found at serine 95 and serine 97. An ATP-binding site is contributed by 167 to 174 (GPPGTGKS).

The protein belongs to the AAA ATPase family. In terms of assembly, proposed to be monomeric or homodimeric in nucleotide-free form and to oligomerize upon binding to ATP to form two stacked hexameric or heptameric rings with a central pore through which ESCRT-III substrates are translocated in an ATP-dependent manner. Interacts with CHMP1A, CHMP1B, CHMP2A, CHMP2B, CHMP3, CHMP4A, CHMP4B, CHMP4C and CHMP6. Interacts with VPS4B; the interaction suggests a heteromeric assembly with VPS4B. Interacts with SPAST. Interacts with IST1. Interacts with ZFYVE19/ANCHR; leading to retain it at midbody. Ubiquitously expressed.

The protein resides in the late endosome membrane. It is found in the midbody. It localises to the cytoplasm. The protein localises to the cytoskeleton. Its subcellular location is the spindle. The enzyme catalyses ATP + H2O = ADP + phosphate + H(+). Involved in late steps of the endosomal multivesicular bodies (MVB) pathway. Recognizes membrane-associated ESCRT-III assemblies and catalyzes their disassembly, possibly in combination with membrane fission. Redistributes the ESCRT-III components to the cytoplasm for further rounds of MVB sorting. MVBs contain intraluminal vesicles (ILVs) that are generated by invagination and scission from the limiting membrane of the endosome and mostly are delivered to lysosomes enabling degradation of membrane proteins, such as stimulated growth factor receptors, lysosomal enzymes and lipids. It is required for proper accomplishment of various processes including the regulation of endosome size, primary cilium organization, mitotic spindle organization, chromosome segregation, and nuclear envelope sealing and spindle disassembly during anaphase. Involved in cytokinesis: retained at the midbody by ZFYVE19/ANCHR and CHMP4C until abscission checkpoint signaling is terminated at late cytokinesis. It is then released following dephosphorylation of CHMP4C, leading to abscission. VPS4A/B are required for the exosomal release of SDCBP, CD63 and syndecan. Critical for normal erythroblast cytokinesis and correct erythropoiesis. Functionally, (Microbial infection) In conjunction with the ESCRT machinery also appears to function in topologically equivalent membrane fission events, such as the terminal stages of cytokinesis and enveloped virus budding (HIV-1 and other lentiviruses). The polypeptide is Vacuolar protein sorting-associated protein 4A (Homo sapiens (Human)).